The following is a 302-amino-acid chain: Homoserine kinase (302 aa).

92 to 102 (PLARGLGSSAT) contributes to the ATP binding site.

Belongs to the GHMP kinase family. Homoserine kinase subfamily.

Its subcellular location is the cytoplasm. It carries out the reaction L-homoserine + ATP = O-phospho-L-homoserine + ADP + H(+). It participates in amino-acid biosynthesis; L-threonine biosynthesis; L-threonine from L-aspartate: step 4/5. Catalyzes the ATP-dependent phosphorylation of L-homoserine to L-homoserine phosphate. This is Homoserine kinase from Trichormus variabilis (strain ATCC 29413 / PCC 7937) (Anabaena variabilis).